Reading from the N-terminus, the 121-residue chain is Large ribosomal subunit protein uL18 (121 aa).

The protein belongs to the universal ribosomal protein uL18 family. Part of the 50S ribosomal subunit; part of the 5S rRNA/L5/L18/L25 subcomplex. Contacts the 5S and 23S rRNAs.

Functionally, this is one of the proteins that bind and probably mediate the attachment of the 5S RNA into the large ribosomal subunit, where it forms part of the central protuberance. This Streptococcus suis (strain 98HAH33) protein is Large ribosomal subunit protein uL18.